A 308-amino-acid chain; its full sequence is Ribonuclease Z (308 aa).

His-61, His-63, Asp-65, His-66, His-139, Asp-210, and His-268 together coordinate Zn(2+). Asp-65 acts as the Proton acceptor in catalysis.

This sequence belongs to the RNase Z family. Homodimer. Zn(2+) serves as cofactor.

The enzyme catalyses Endonucleolytic cleavage of RNA, removing extra 3' nucleotides from tRNA precursor, generating 3' termini of tRNAs. A 3'-hydroxy group is left at the tRNA terminus and a 5'-phosphoryl group is left at the trailer molecule.. Zinc phosphodiesterase, which displays some tRNA 3'-processing endonuclease activity. Probably involved in tRNA maturation, by removing a 3'-trailer from precursor tRNA. The polypeptide is Ribonuclease Z (Natronomonas pharaonis (strain ATCC 35678 / DSM 2160 / CIP 103997 / JCM 8858 / NBRC 14720 / NCIMB 2260 / Gabara) (Halobacterium pharaonis)).